The primary structure comprises 41 residues: Trypsin inhibitor 2c (41 aa).

2 disulfide bridges follow: C11–C32 and C15–C28.

Its function is as follows. Inhibits bovine trypsin with a Ki of 0.174 nM and trypsin-like proteases from G.mellonella larvae. Has no activity against serine proteases chymotrypsin, subtilisin and elastase. Has no activity against cysteine proteases from beetle gut. This chain is Trypsin inhibitor 2c, found in Fagopyrum esculentum (Common buckwheat).